Here is a 452-residue protein sequence, read N- to C-terminus: MTDAAAVIERVRQRVDPTPAERRALAAAASRLTERAEAAIAELPVAADVVQVGSTARGTWVAGDRDIDLFVRFPSDLPREQLETYGTTVGAAVLPDGHEEYAEHPYVTGTFEGYAVDLVPCYDVAAATEIKSAVDRTPFHTTYLQEHLDDGLAADVRLCKQFLKGIGVYGSDLRTQGFSGYLCELLVVEYGGFEAMLAAIEDWQPPVVIDPAAHQQASFDDPLVVVDPTDPERNVAAVVSAANVATVQHHARRFRATPSEDAFTPASPAPLDAAALRSHIDRRDTTPLAVVLDAPDVVADQLYPQLYRSRDGVVRGLREHGFDVVRAAAWADERAVVFVELASAELPAVERHVGPPVSVGTHAERFYETYADDDGVYGPFVDDDGRYVVERDRDVRTAGGFARTELGTVALGARIESRVASGDYDVYVGDAVVEALLPEFESELAAYVDPKA.

ATP contacts are provided by serine 54 and arginine 57. Positions 54 and 57 each coordinate CTP. Residues aspartate 66, aspartate 68, and aspartate 117 each contribute to the Mg(2+) site. ATP is bound by residues histidine 140, lysine 160, and tyrosine 169. CTP-binding residues include histidine 140, lysine 160, and tyrosine 169.

The protein belongs to the tRNA nucleotidyltransferase/poly(A) polymerase family. Archaeal CCA-adding enzyme subfamily. Homodimer. Mg(2+) is required as a cofactor.

It catalyses the reaction a tRNA precursor + 2 CTP + ATP = a tRNA with a 3' CCA end + 3 diphosphate. The catalysed reaction is a tRNA with a 3' CCA end + 2 CTP + ATP = a tRNA with a 3' CCACCA end + 3 diphosphate. Functionally, catalyzes the addition and repair of the essential 3'-terminal CCA sequence in tRNAs without using a nucleic acid template. Adds these three nucleotides in the order of C, C, and A to the tRNA nucleotide-73, using CTP and ATP as substrates and producing inorganic pyrophosphate. tRNA 3'-terminal CCA addition is required both for tRNA processing and repair. Also involved in tRNA surveillance by mediating tandem CCA addition to generate a CCACCA at the 3' terminus of unstable tRNAs. While stable tRNAs receive only 3'-terminal CCA, unstable tRNAs are marked with CCACCA and rapidly degraded. In Halobacterium salinarum (strain ATCC 29341 / DSM 671 / R1), this protein is CCA-adding enzyme.